A 142-amino-acid chain; its full sequence is MYPKQFSLYNYSLETMSKDENVESKETIRVDKRVREDEEEEEEKKIDTFFKLIKHYQEARKRRREELAENSGVVRRKSNGGERSGIVVPAFQPEDFSQCRTGLKPPLMFVSDHKEENTKVEQEEDQTEERNEDKALDLNLAL.

Residues aspartate 47–isoleucine 53 form an involved in NPR1/NIM1 interaction region. The Nuclear localization signal signature appears at arginine 60 to arginine 64. Disordered regions lie at residues arginine 63 to isoleucine 86 and methionine 108 to leucine 142. A coiled-coil region spans residues valine 110–alanine 141. A compositionally biased stretch (basic and acidic residues) spans serine 111–glutamate 121.

Belongs to the NPR1-interactor family. In terms of assembly, interacts with NPR1 C-terminal region.

The protein localises to the nucleus. This chain is Protein NIM1-INTERACTING 1, found in Arabidopsis thaliana (Mouse-ear cress).